The sequence spans 315 residues: Probable NAD(P)H-dependent D-xylose reductase xyl1 (315 aa).

The Proton donor role is filled by Y50. Residue H112 coordinates substrate. NAD(+) is bound by residues 166–167, 215–224, and 271–281; these read SN, SSFGPLSFVE, and KSNDPTRLAQN.

It belongs to the aldo/keto reductase family.

It catalyses the reaction xylitol + NAD(+) = D-xylose + NADH + H(+). It carries out the reaction xylitol + NADP(+) = D-xylose + NADPH + H(+). It functions in the pathway carbohydrate metabolism; D-xylose degradation. Its function is as follows. Catalyzes the initial reaction in the xylose utilization pathway by reducing D-xylose into xylitol. Xylose is a major component of hemicelluloses such as xylan. Most fungi utilize D-xylose via three enzymatic reactions, xylose reductase (XR), xylitol dehydrogenase (XDH), and xylulokinase, to form xylulose 5-phosphate, which enters pentose phosphate pathway. In Aspergillus fumigatus (strain ATCC MYA-4609 / CBS 101355 / FGSC A1100 / Af293) (Neosartorya fumigata), this protein is Probable NAD(P)H-dependent D-xylose reductase xyl1 (xyl1).